A 379-amino-acid polypeptide reads, in one-letter code: Gonadotropin-releasing hormone II receptor (379 aa).

The Extracellular segment spans residues 1-45 (MSGNTTLLLSNPTNVLDNSSVLNVSVSPPVLKWETPTFTTAARFR). N-linked (GlcNAc...) asparagine glycans are attached at residues N4, N18, and N23. Residues 46–65 (VAATLVLFVFAAASNLSVLL) form a helical membrane-spanning segment. At 66–80 (SVTRGRGRRLASHLR) the chain is on the cytoplasmic side. A helical membrane pass occupies residues 81–100 (PLIASLASADLVMTFVVMPL). The Extracellular portion of the chain corresponds to 101 to 118 (DAVWNVTVQWYAGDAMCK). N-linked (GlcNAc...) asparagine glycosylation occurs at N105. Cysteines 117 and 194 form a disulfide. The helical transmembrane segment at 119–140 (LMCFLKLFAMHSAAFILVVVSL) threads the bilayer. Residues 141–167 (DRHHAILHPLDTLDAGRRNRRMLLTAW) are Cytoplasmic-facing. A helical transmembrane segment spans residues 168–184 (ILSLLLASPQLFIFRAI). The Extracellular portion of the chain corresponds to 185–210 (KAKGVDFVQCATHGSFQQHWQETAYN). A helical membrane pass occupies residues 211–230 (MFHFVTLYVFPLLVMSLCYT). The Cytoplasmic segment spans residues 231–283 (RILVEINRQMHRSKDKAGEPCLRRSGTDMIPKARMKTLKMTIIIVASFVICWT). A helical transmembrane segment spans residues 284–302 (PYYLLGIWYWFQPQMLHVI). The Extracellular segment spans residues 303 to 308 (PDYVHH). Residues 309-328 (VFFVFGNLNTCCDPVIYGFF) form a helical membrane-spanning segment. Residues 329 to 379 (TPSFRADLSRCFCWRNQNASAKSLPHFSGHRREVSGEAESDLGSGDQPSGQ) lie on the Cytoplasmic side of the membrane. The tract at residues 355–379 (FSGHRREVSGEAESDLGSGDQPSGQ) is disordered.

It belongs to the G-protein coupled receptor 1 family. Post-translationally, phosphorylated on the C-terminal cytoplasmic tail.

The protein localises to the cell membrane. In terms of biological role, receptor for gonadotropin releasing hormone II (GnRH II). This receptor mediates its action by association with G proteins that activate a phosphatidylinositol-calcium second messenger system. This Clarias gariepinus (North African catfish) protein is Gonadotropin-releasing hormone II receptor.